Reading from the N-terminus, the 492-residue chain is MDNYQTKNISNLLTSLCFTTLLILAPVVICTRQHRFDSPKRSLLANEQDLVTGLPGQPDVSFRHYAGYVPVDESNGRAMFYWFFEAMDLPKEKPLVLWLNGGPGCSSVGYGATQEIGPFLVDTNGNGLNFNPYAWNKEANMLFLESPVGVGFSYSNTSSDYQKLGDDFTARDAYTFLCNWFEKFPEHKENTFYIAGESYAGKYVPELAEVVYDNNNNNKKNGSSFHINLKGILLGNPETSDAEDWRGWVDYAWSHAVISDETHRIITRTCNFSSDNTWSNDECNEAVAEVLKQYHEIDIYSIYTSVCIGDSARSSYFDSAQFKTNSRISSKRMPPRLMGGYDPCLDDYARVFYNRADVQKSLHASDGVNLKNWSICNMEIFNNWTGSNPSVLPIYEKLIAGGLRIWVYSGDTDGRVPVLATRYSLNALELPIKTAWRPWYHEKQVSGWLQEYEGLTFATFRGAGHAVPCFKPSSSLAFFSAFLSGVPPPPSR.

The N-terminal stretch at 1–30 (MDNYQTKNISNLLTSLCFTTLLILAPVVIC) is a signal peptide. 3 cysteine pairs are disulfide-bonded: Cys105-Cys376, Cys270-Cys283, and Cys307-Cys344. An N-linked (GlcNAc...) asparagine glycan is attached at Asn156. Ser198 is a catalytic residue. Residues Asn221 and Asn271 are each glycosylated (N-linked (GlcNAc...) asparagine). N-linked (GlcNAc...) asparagine glycosylation is found at Asn372 and Asn383. Active-site residues include Asp413 and His465.

It belongs to the peptidase S10 family. Expressed in roots, senescent leaves, stems, flowers and siliques.

It is found in the secreted. In terms of biological role, probable carboxypeptidase. This chain is Serine carboxypeptidase-like 31 (SCPL31), found in Arabidopsis thaliana (Mouse-ear cress).